Here is a 192-residue protein sequence, read N- to C-terminus: Phosphoheptose isomerase (192 aa).

Residues 37–192 enclose the SIS domain; sequence IAASLRDGGK…IMLIEKELAV (156 aa). 52 to 54 contacts substrate; it reads NGG. His-61 and Glu-65 together coordinate Zn(2+). Residues Glu-65, 93–94, 119–121, Ser-124, and Gln-172 each bind substrate; these read ND and STS. Positions 172 and 180 each coordinate Zn(2+).

It belongs to the SIS family. GmhA subfamily. As to quaternary structure, homotetramer. Zn(2+) is required as a cofactor.

It is found in the cytoplasm. It catalyses the reaction 2 D-sedoheptulose 7-phosphate = D-glycero-alpha-D-manno-heptose 7-phosphate + D-glycero-beta-D-manno-heptose 7-phosphate. It functions in the pathway carbohydrate biosynthesis; D-glycero-D-manno-heptose 7-phosphate biosynthesis; D-glycero-alpha-D-manno-heptose 7-phosphate and D-glycero-beta-D-manno-heptose 7-phosphate from sedoheptulose 7-phosphate: step 1/1. Catalyzes the isomerization of sedoheptulose 7-phosphate in D-glycero-D-manno-heptose 7-phosphate. The protein is Phosphoheptose isomerase of Tolumonas auensis (strain DSM 9187 / NBRC 110442 / TA 4).